We begin with the raw amino-acid sequence, 156 residues long: Arginine repressor (156 aa).

It belongs to the ArgR family.

It localises to the cytoplasm. The protein operates within amino-acid biosynthesis; L-arginine biosynthesis [regulation]. Regulates arginine biosynthesis genes. This is Arginine repressor from Tolumonas auensis (strain DSM 9187 / NBRC 110442 / TA 4).